The chain runs to 288 residues: Probable prolyl 4-hydroxylase 6 (288 aa).

Residues 1 to 4 (MDSQ) lie on the Cytoplasmic side of the membrane. Residues 5–27 (YFLAFSLSLLLIFSQISSFSFSV) form a helical; Signal-anchor for type II membrane protein membrane-spanning segment. The Lumenal portion of the chain corresponds to 28–288 (DPTRITQLSW…GFCRKSCKAC (261 aa)). Residues 116 to 238 (NGEALQILHY…KWSATRWIHV (123 aa)) form the Fe2OG dioxygenase domain. The Fe cation site is built by H134 and D136. N-linked (GlcNAc...) asparagine glycosylation is found at N160 and N210. H219 is a Fe cation binding site. K229 is a 2-oxoglutarate binding site. Residues 248-288 (CVDDHESCQEWADAGECEKNPMYMVGSETSLGFCRKSCKAC) form the ShKT domain. Intrachain disulfides connect C248/C288, C255/C281, and C264/C285.

It belongs to the P4HA family. Fe(2+) serves as cofactor. It depends on L-ascorbate as a cofactor.

It localises to the endoplasmic reticulum membrane. It carries out the reaction L-prolyl-[collagen] + 2-oxoglutarate + O2 = trans-4-hydroxy-L-prolyl-[collagen] + succinate + CO2. In terms of biological role, catalyzes the post-translational formation of 4-hydroxyproline in -Xaa-Pro-Gly- sequences in proline-rich peptide sequences of plant glycoproteins and other proteins. Hydroxyprolines are important constituent of many plant cell wall glycoproteins such as extensins, hydroxyproline-rich glycoproteins, lectins and arabinogalactan proteins. The protein is Probable prolyl 4-hydroxylase 6 of Arabidopsis thaliana (Mouse-ear cress).